The sequence spans 459 residues: Ribulose bisphosphate carboxylase (459 aa).

Substrate is bound at residue asparagine 111. Lysine 166 acts as the Proton acceptor in catalysis. Lysine 168 provides a ligand contact to substrate. Residues lysine 191, aspartate 193, and glutamate 194 each coordinate Mg(2+). Lysine 191 carries the N6-carboxylysine modification. Histidine 287 functions as the Proton acceptor in the catalytic mechanism. Positions 288, 321, and 368 each coordinate substrate.

The protein belongs to the RuBisCO large chain family. Type II subfamily. As to quaternary structure, homodimer. It depends on Mg(2+) as a cofactor.

It catalyses the reaction 2 (2R)-3-phosphoglycerate + 2 H(+) = D-ribulose 1,5-bisphosphate + CO2 + H2O. The catalysed reaction is D-ribulose 1,5-bisphosphate + O2 = 2-phosphoglycolate + (2R)-3-phosphoglycerate + 2 H(+). RuBisCO catalyzes two reactions: the carboxylation of D-ribulose 1,5-bisphosphate, the primary event in carbon dioxide fixation, as well as the oxidative fragmentation of the pentose substrate. Both reactions occur simultaneously and in competition at the same active site. This Paramagnetospirillum magnetotacticum (Aquaspirillum magnetotacticum) protein is Ribulose bisphosphate carboxylase.